The following is a 342-amino-acid chain: GTPase Obg (342 aa).

The Obg domain occupies 1–159 (MQFIDQAQIE…KLLRLELKLL (159 aa)). Positions 160 to 330 (AEVGIIGLPN…MLQEVWGILD (171 aa)) constitute an OBG-type G domain. Residues 166–173 (GLPNAGKS), 191–195 (FTTLI), 213–216 (DIPG), 280–283 (NKID), and 311–313 (SAV) contribute to the GTP site. S173 and T193 together coordinate Mg(2+).

It belongs to the TRAFAC class OBG-HflX-like GTPase superfamily. OBG GTPase family. In terms of assembly, monomer. It depends on Mg(2+) as a cofactor.

The protein localises to the cytoplasm. In terms of biological role, an essential GTPase which binds GTP, GDP and possibly (p)ppGpp with moderate affinity, with high nucleotide exchange rates and a fairly low GTP hydrolysis rate. Plays a role in control of the cell cycle, stress response, ribosome biogenesis and in those bacteria that undergo differentiation, in morphogenesis control. The chain is GTPase Obg from Nostoc sp. (strain PCC 7120 / SAG 25.82 / UTEX 2576).